The chain runs to 341 residues: S-adenosylmethionine:tRNA ribosyltransferase-isomerase (341 aa).

The protein belongs to the QueA family. As to quaternary structure, monomer.

Its subcellular location is the cytoplasm. The enzyme catalyses 7-aminomethyl-7-carbaguanosine(34) in tRNA + S-adenosyl-L-methionine = epoxyqueuosine(34) in tRNA + adenine + L-methionine + 2 H(+). Its pathway is tRNA modification; tRNA-queuosine biosynthesis. Its function is as follows. Transfers and isomerizes the ribose moiety from AdoMet to the 7-aminomethyl group of 7-deazaguanine (preQ1-tRNA) to give epoxyqueuosine (oQ-tRNA). The chain is S-adenosylmethionine:tRNA ribosyltransferase-isomerase from Caldanaerobacter subterraneus subsp. tengcongensis (strain DSM 15242 / JCM 11007 / NBRC 100824 / MB4) (Thermoanaerobacter tengcongensis).